A 199-amino-acid polypeptide reads, in one-letter code: Peptidyl-tRNA hydrolase (199 aa).

A tRNA-binding site is contributed by Tyr-18. Catalysis depends on His-23, which acts as the Proton acceptor. 3 residues coordinate tRNA: Tyr-72, Asn-74, and Asn-120.

Belongs to the PTH family. In terms of assembly, monomer.

It localises to the cytoplasm. The enzyme catalyses an N-acyl-L-alpha-aminoacyl-tRNA + H2O = an N-acyl-L-amino acid + a tRNA + H(+). In terms of biological role, hydrolyzes ribosome-free peptidyl-tRNAs (with 1 or more amino acids incorporated), which drop off the ribosome during protein synthesis, or as a result of ribosome stalling. Functionally, catalyzes the release of premature peptidyl moieties from peptidyl-tRNA molecules trapped in stalled 50S ribosomal subunits, and thus maintains levels of free tRNAs and 50S ribosomes. This is Peptidyl-tRNA hydrolase from Bifidobacterium adolescentis (strain ATCC 15703 / DSM 20083 / NCTC 11814 / E194a).